A 55-amino-acid polypeptide reads, in one-letter code: Male-specific sperm protein Mst84Dc (55 aa).

This sequence belongs to the MST(3)CGP family. Testis.

In Drosophila melanogaster (Fruit fly), this protein is Male-specific sperm protein Mst84Dc (Mst84Dc).